The primary structure comprises 248 residues: Probable transcriptional regulatory protein BBta_6910 (248 aa).

Belongs to the TACO1 family.

Its subcellular location is the cytoplasm. The protein is Probable transcriptional regulatory protein BBta_6910 of Bradyrhizobium sp. (strain BTAi1 / ATCC BAA-1182).